The following is a 1513-amino-acid chain: DNA polymerase alpha catalytic subunit (1513 aa).

Positions 235–254 are disordered; sequence STNQNANASDSKRVSNQTND. Residues Cys1344, Cys1347, Cys1370, Cys1373, Cys1404, Cys1409, Cys1422, and Cys1427 each coordinate Zn(2+). The segment at 1344-1373 adopts a CysA-type zinc-finger fold; that stretch reads CPHCSESYHFPGIFQDGKNNTLSGLLCIKC. The CysB motif signature appears at 1404 to 1427; it reads CQEPACGAVSRQLLYNNKCINLAC.

It belongs to the DNA polymerase type-B family.

It localises to the nucleus. It catalyses the reaction DNA(n) + a 2'-deoxyribonucleoside 5'-triphosphate = DNA(n+1) + diphosphate. Functionally, polymerase alpha in a complex with DNA primase is a replicative polymerase. The protein is DNA polymerase alpha catalytic subunit of Oxytricha trifallax (Sterkiella histriomuscorum).